The following is a 372-amino-acid chain: MSETRPKTFFDISIGGKPAGRIVFELYSDVVPKTAENFLKLCEGNSGFAKSKPDIPLSYKGSIFHRVIKSFMCQFGDFTNFNGTGGESIYGEKFEDENFTLKHDKPFLLSMANAGANTNGSQCFITCVPTPHLDGKHVVFGEVIQGKRLVRTIENNATDEADKPAKEVKIEDCGVLPSDYTVPADAEATPTDAYGDNYEENITDDSKVDPNDVNSVLNAVEAVKEIGTKQFKEKNFEVALVKYEKSSQMLKQYFPQDLPEEDVKKIDALRVSLFLNIALVSLKSKNYSRTLSAATEALHADNTDDKSKAKALYRRGLAYYYTKNAEMAVTDLELATTYQPHDTAIIKALQDAKKAKKELIAKQKKSLSKMFS.

The PPIase cyclophilin-type domain maps to 9 to 175 (FFDISIGGKP…KEVKIEDCGV (167 aa)). TPR repeat units follow at residues 220-253 (VEAV…LKQY), 271-304 (VSLF…DNTD), and 309-342 (AKAL…QPHD).

Belongs to the cyclophilin-type PPIase family. PPIase D subfamily.

It localises to the cytoplasm. The enzyme catalyses [protein]-peptidylproline (omega=180) = [protein]-peptidylproline (omega=0). In terms of biological role, PPIases accelerate the folding of proteins. It catalyzes the cis-trans isomerization of proline imidic peptide bonds in oligopeptides. This chain is Peptidyl-prolyl cis-trans isomerase D (CPR6), found in Kluyveromyces lactis (strain ATCC 8585 / CBS 2359 / DSM 70799 / NBRC 1267 / NRRL Y-1140 / WM37) (Yeast).